A 94-amino-acid chain; its full sequence is Large ribosomal subunit protein bL25 (94 aa).

It belongs to the bacterial ribosomal protein bL25 family. In terms of assembly, part of the 50S ribosomal subunit; part of the 5S rRNA/L5/L18/L25 subcomplex. Contacts the 5S rRNA. Binds to the 5S rRNA independently of L5 and L18.

This is one of the proteins that binds to the 5S RNA in the ribosome where it forms part of the central protuberance. The polypeptide is Large ribosomal subunit protein bL25 (Shigella boydii serotype 4 (strain Sb227)).